We begin with the raw amino-acid sequence, 514 residues long: Peptide chain release factor 3 (514 aa).

One can recognise a tr-type G domain in the interval 8-268; that stretch reads KKRRTFAIIS…TFLEFAPEPH (261 aa). GTP contacts are provided by residues 17–24, 85–89, and 139–142; these read SHPDAGKT, DTPGH, and NKLD.

This sequence belongs to the TRAFAC class translation factor GTPase superfamily. Classic translation factor GTPase family. PrfC subfamily.

It is found in the cytoplasm. Increases the formation of ribosomal termination complexes and stimulates activities of RF-1 and RF-2. It binds guanine nucleotides and has strong preference for UGA stop codons. It may interact directly with the ribosome. The stimulation of RF-1 and RF-2 is significantly reduced by GTP and GDP, but not by GMP. This Streptococcus pyogenes serotype M1 protein is Peptide chain release factor 3.